A 448-amino-acid polypeptide reads, in one-letter code: Divalent metal cation transporter MntH (448 aa).

Helical transmembrane passes span leucine 41–tryptophan 61, serine 69–leucine 89, glycine 117–isoleucine 137, phenylalanine 147–phenylalanine 167, isoleucine 176–valine 196, isoleucine 215–proline 235, phenylalanine 270–phenylalanine 290, leucine 307–alanine 327, valine 363–glutamate 383, leucine 384–valine 404, and isoleucine 424–threonine 444.

The protein belongs to the NRAMP family.

The protein resides in the cell membrane. H(+)-stimulated, divalent metal cation uptake system. This chain is Divalent metal cation transporter MntH, found in Listeria welshimeri serovar 6b (strain ATCC 35897 / DSM 20650 / CCUG 15529 / CIP 8149 / NCTC 11857 / SLCC 5334 / V8).